A 191-amino-acid polypeptide reads, in one-letter code: Amelogenin, X isoform (191 aa).

A signal peptide spans M1–A16. S32 carries the phosphoserine modification. The segment covering I95–P117 has biased composition (low complexity). The segment at I95 to D191 is disordered. Positions N118–L171 are enriched in pro residues.

The protein belongs to the amelogenin family. In terms of assembly, interacts with KRT5. Phosphorylated by FAM20C in vitro.

It localises to the secreted. The protein localises to the extracellular space. It is found in the extracellular matrix. Its function is as follows. Plays a role in biomineralization. Seems to regulate the formation of crystallites during the secretory stage of tooth enamel development. Thought to play a major role in the structural organization and mineralization of developing enamel. The polypeptide is Amelogenin, X isoform (AMELX) (Homo sapiens (Human)).